We begin with the raw amino-acid sequence, 119 residues long: Ribosome-binding factor A (119 aa).

Belongs to the RbfA family. Monomer. Binds 30S ribosomal subunits, but not 50S ribosomal subunits or 70S ribosomes.

The protein resides in the cytoplasm. Functionally, one of several proteins that assist in the late maturation steps of the functional core of the 30S ribosomal subunit. Associates with free 30S ribosomal subunits (but not with 30S subunits that are part of 70S ribosomes or polysomes). Required for efficient processing of 16S rRNA. May interact with the 5'-terminal helix region of 16S rRNA. The protein is Ribosome-binding factor A of Limosilactobacillus reuteri (strain DSM 20016) (Lactobacillus reuteri).